The following is a 375-amino-acid chain: Queuine tRNA-ribosyltransferase (375 aa).

The active-site Proton acceptor is the Asp89. Residues 89 to 93 (DSGGF), Asp143, Gln187, and Gly214 contribute to the substrate site. The RNA binding stretch occupies residues 245-251 (GVGKPED). The Nucleophile role is filled by Asp264. Residues 269-273 (TRNAR) are RNA binding; important for wobble base 34 recognition. 4 residues coordinate Zn(2+): Cys302, Cys304, Cys307, and His333.

This sequence belongs to the queuine tRNA-ribosyltransferase family. As to quaternary structure, homodimer. Within each dimer, one monomer is responsible for RNA recognition and catalysis, while the other monomer binds to the replacement base PreQ1. Requires Zn(2+) as cofactor.

It catalyses the reaction 7-aminomethyl-7-carbaguanine + guanosine(34) in tRNA = 7-aminomethyl-7-carbaguanosine(34) in tRNA + guanine. Its pathway is tRNA modification; tRNA-queuosine biosynthesis. Catalyzes the base-exchange of a guanine (G) residue with the queuine precursor 7-aminomethyl-7-deazaguanine (PreQ1) at position 34 (anticodon wobble position) in tRNAs with GU(N) anticodons (tRNA-Asp, -Asn, -His and -Tyr). Catalysis occurs through a double-displacement mechanism. The nucleophile active site attacks the C1' of nucleotide 34 to detach the guanine base from the RNA, forming a covalent enzyme-RNA intermediate. The proton acceptor active site deprotonates the incoming PreQ1, allowing a nucleophilic attack on the C1' of the ribose to form the product. After dissociation, two additional enzymatic reactions on the tRNA convert PreQ1 to queuine (Q), resulting in the hypermodified nucleoside queuosine (7-(((4,5-cis-dihydroxy-2-cyclopenten-1-yl)amino)methyl)-7-deazaguanosine). This Aliivibrio fischeri (strain ATCC 700601 / ES114) (Vibrio fischeri) protein is Queuine tRNA-ribosyltransferase.